Consider the following 341-residue polypeptide: Tryptophan--tRNA ligase (341 aa).

ATP is bound by residues Arg11–Thr13 and Gly19–His20. Residues Pro12–His20 carry the 'HIGH' region motif. Asp140 contacts L-tryptophan. ATP is bound by residues Gly152–Asp154, Leu193, and Lys201–Ser205. The 'KMSKS' region signature appears at Lys201–Ser205.

This sequence belongs to the class-I aminoacyl-tRNA synthetase family. In terms of assembly, homodimer.

It localises to the cytoplasm. It carries out the reaction tRNA(Trp) + L-tryptophan + ATP = L-tryptophyl-tRNA(Trp) + AMP + diphosphate + H(+). Catalyzes the attachment of tryptophan to tRNA(Trp). The sequence is that of Tryptophan--tRNA ligase from Clostridium longisporum.